Consider the following 250-residue polypeptide: UPF0259 membrane protein bbp_256 (250 aa).

The next 6 membrane-spanning stretches (helical) occupy residues 21 to 41, 86 to 106, 125 to 145, 146 to 166, 188 to 208, and 216 to 236; these read PIIVTFVLLSSTITVVIDSII, FSLLIGSTFLLGNLITFIQMT, FFKLLQLIFTTTIITQLGFLL, YFIPGFTTIILFSLSPIILLI, IIVPAIIFWLCFKIFIILIIS, and FLAYFILNLCINFISSILIIY.

This sequence belongs to the UPF0259 family.

Its subcellular location is the cell membrane. This Buchnera aphidicola subsp. Baizongia pistaciae (strain Bp) protein is UPF0259 membrane protein bbp_256.